The primary structure comprises 366 residues: Small ribosomal subunit biogenesis GTPase RsgA (366 aa).

Positions R107–V266 constitute a CP-type G domain. Residues T154 to D157 and G208 to T216 each bind GTP. C289, C294, H296, and C302 together coordinate Zn(2+).

This sequence belongs to the TRAFAC class YlqF/YawG GTPase family. RsgA subfamily. As to quaternary structure, monomer. Associates with 30S ribosomal subunit, binds 16S rRNA. Requires Zn(2+) as cofactor.

Its subcellular location is the cytoplasm. Functionally, one of several proteins that assist in the late maturation steps of the functional core of the 30S ribosomal subunit. Helps release RbfA from mature subunits. May play a role in the assembly of ribosomal proteins into the subunit. Circularly permuted GTPase that catalyzes slow GTP hydrolysis, GTPase activity is stimulated by the 30S ribosomal subunit. The polypeptide is Small ribosomal subunit biogenesis GTPase RsgA (Streptomyces coelicolor (strain ATCC BAA-471 / A3(2) / M145)).